The following is a 479-amino-acid chain: Cardiolipin synthase A (479 aa).

Transmembrane regions (helical) follow at residues F8–V28 and I38–F58. PLD phosphodiesterase domains are found at residues V218–Y245 and Q392–S419. Residues H223, K225, D230, H397, K399, and D404 contribute to the active site.

Belongs to the phospholipase D family. Cardiolipin synthase subfamily. ClsA sub-subfamily.

The protein localises to the cell inner membrane. It carries out the reaction 2 a 1,2-diacyl-sn-glycero-3-phospho-(1'-sn-glycerol) = a cardiolipin + glycerol. Catalyzes the reversible phosphatidyl group transfer from one phosphatidylglycerol molecule to another to form cardiolipin (CL) (diphosphatidylglycerol) and glycerol. This chain is Cardiolipin synthase A, found in Pseudomonas putida (strain W619).